The primary structure comprises 296 residues: Fructose-bisphosphate aldolase class 1 (296 aa).

The active-site Proton acceptor is Glu-175. Residue Lys-212 is the Schiff-base intermediate with dihydroxyacetone-P of the active site.

The protein belongs to the class I fructose-bisphosphate aldolase family.

The enzyme catalyses beta-D-fructose 1,6-bisphosphate = D-glyceraldehyde 3-phosphate + dihydroxyacetone phosphate. Its pathway is carbohydrate degradation; glycolysis; D-glyceraldehyde 3-phosphate and glycerone phosphate from D-glucose: step 4/4. In Staphylococcus haemolyticus (strain JCSC1435), this protein is Fructose-bisphosphate aldolase class 1.